The sequence spans 345 residues: Carbamoyl phosphate synthase small chain (345 aa).

The segment at 1–169 is CPSase; the sequence is MKKYLVMEDG…FVKGEEGGTV (169 aa). S45, G213, and G215 together coordinate L-glutamine. One can recognise a Glutamine amidotransferase type-1 domain in the interval 168–345; that stretch reads TVLFIDLGSK…GEMKRRIGYA (178 aa). Residue C242 is the Nucleophile of the active site. L-glutamine is bound by residues F243, Q246, N282, G284, and Y285. Catalysis depends on residues H321 and E323.

The protein belongs to the CarA family. Composed of two chains; the small (or glutamine) chain promotes the hydrolysis of glutamine to ammonia, which is used by the large (or ammonia) chain to synthesize carbamoyl phosphate. Tetramer of heterodimers (alpha,beta)4.

It carries out the reaction hydrogencarbonate + L-glutamine + 2 ATP + H2O = carbamoyl phosphate + L-glutamate + 2 ADP + phosphate + 2 H(+). It catalyses the reaction L-glutamine + H2O = L-glutamate + NH4(+). It functions in the pathway amino-acid biosynthesis; L-arginine biosynthesis; carbamoyl phosphate from bicarbonate: step 1/1. The protein operates within pyrimidine metabolism; UMP biosynthesis via de novo pathway; (S)-dihydroorotate from bicarbonate: step 1/3. Functionally, small subunit of the glutamine-dependent carbamoyl phosphate synthetase (CPSase). CPSase catalyzes the formation of carbamoyl phosphate from the ammonia moiety of glutamine, carbonate, and phosphate donated by ATP, constituting the first step of 2 biosynthetic pathways, one leading to arginine and/or urea and the other to pyrimidine nucleotides. The small subunit (glutamine amidotransferase) binds and cleaves glutamine to supply the large subunit with the substrate ammonia. This is Carbamoyl phosphate synthase small chain from Thermoplasma volcanium (strain ATCC 51530 / DSM 4299 / JCM 9571 / NBRC 15438 / GSS1).